The following is a 315-amino-acid chain: Homoserine kinase (315 aa).

97 to 107 (PPARGLGSSAT) lines the ATP pocket.

The protein belongs to the GHMP kinase family. Homoserine kinase subfamily.

It is found in the cytoplasm. The catalysed reaction is L-homoserine + ATP = O-phospho-L-homoserine + ADP + H(+). The protein operates within amino-acid biosynthesis; L-threonine biosynthesis; L-threonine from L-aspartate: step 4/5. Functionally, catalyzes the ATP-dependent phosphorylation of L-homoserine to L-homoserine phosphate. The chain is Homoserine kinase from Prochlorococcus marinus (strain MIT 9515).